Here is a 397-residue protein sequence, read N- to C-terminus: Acetate kinase (397 aa).

Asn7 serves as a coordination point for Mg(2+). Lys14 is a binding site for ATP. Substrate is bound at residue Arg91. Catalysis depends on Asp148, which acts as the Proton donor/acceptor. Residues His208–Gly212, Asp283–Arg285, and Gly331–Asn335 contribute to the ATP site. A Mg(2+)-binding site is contributed by Glu383.

The protein belongs to the acetokinase family. As to quaternary structure, homodimer. The cofactor is Mg(2+). Mn(2+) serves as cofactor.

Its subcellular location is the cytoplasm. The enzyme catalyses acetate + ATP = acetyl phosphate + ADP. The protein operates within metabolic intermediate biosynthesis; acetyl-CoA biosynthesis; acetyl-CoA from acetate: step 1/2. Catalyzes the formation of acetyl phosphate from acetate and ATP. Can also catalyze the reverse reaction. The protein is Acetate kinase of Heliobacterium modesticaldum (strain ATCC 51547 / Ice1).